Consider the following 470-residue polypeptide: 3-isopropylmalate dehydratase large subunit (470 aa).

3 residues coordinate [4Fe-4S] cluster: C348, C409, and C412.

Belongs to the aconitase/IPM isomerase family. LeuC type 1 subfamily. As to quaternary structure, heterodimer of LeuC and LeuD. [4Fe-4S] cluster serves as cofactor.

It catalyses the reaction (2R,3S)-3-isopropylmalate = (2S)-2-isopropylmalate. It participates in amino-acid biosynthesis; L-leucine biosynthesis; L-leucine from 3-methyl-2-oxobutanoate: step 2/4. Its function is as follows. Catalyzes the isomerization between 2-isopropylmalate and 3-isopropylmalate, via the formation of 2-isopropylmaleate. The polypeptide is 3-isopropylmalate dehydratase large subunit (Acidithiobacillus ferrooxidans (strain ATCC 23270 / DSM 14882 / CIP 104768 / NCIMB 8455) (Ferrobacillus ferrooxidans (strain ATCC 23270))).